We begin with the raw amino-acid sequence, 259 residues long: 5'-nucleotidase SurE (259 aa).

Positions 8, 9, 40, and 92 each coordinate a divalent metal cation.

Belongs to the SurE nucleotidase family. It depends on a divalent metal cation as a cofactor.

It is found in the cytoplasm. The catalysed reaction is a ribonucleoside 5'-phosphate + H2O = a ribonucleoside + phosphate. Nucleotidase that shows phosphatase activity on nucleoside 5'-monophosphates. This Xanthomonas euvesicatoria pv. vesicatoria (strain 85-10) (Xanthomonas campestris pv. vesicatoria) protein is 5'-nucleotidase SurE.